A 694-amino-acid polypeptide reads, in one-letter code: Beta-galactosidase (694 aa).

The tract at residues 1–31 (MGKRFPSGWFSPRVHPPRRQRSPMTNQATPG) is disordered. Residues 22–31 (SPMTNQATPG) are compositionally biased toward polar residues. Substrate-binding residues include Arg144 and Asn182. The Proton donor role is filled by Glu183. The active-site Nucleophile is Glu341. Residues Trp349 and 389-392 (EKFH) each bind substrate.

The protein belongs to the glycosyl hydrolase 42 family. In terms of assembly, homotrimer.

It catalyses the reaction Hydrolysis of terminal non-reducing beta-D-galactose residues in beta-D-galactosides.. Strongly inhibited by glucose. No activity is lost during treatment with 100 mM EDTA after 2 hours. Activity not considerably affected by metal ions (5 mM), including Na(+), K(+), Mg(2+), Co(2+) and Ca(2+). Completely inhibited by Cu(2+) and Zn(2+) (5 mM) and is strongly inhibited by Mn(2+) (11%), Fe(2+) (25%) and Ni(2+) (38%) in comparison with the activity in the absence of cations (100%). Activity not affected by dithiothreitol, beta-mercaptoethanol and L-cysteine whereas reduced glutathione almost completely inactivates it. With ONPG as substrate, the addition of ethanol up to 20% still slightly stimulates activity. The activity increases up to 120% in the presence of 8% v/v ethanol at pH 5.5. Functionally, hydrolyzes p-nitrophenyl-beta-D-galactopyranoside (PNPG), o-nitrophenyl-beta-D-galactopyranoside (ONPG) and chromogen 5-bromo-4-chloro-3-indolyl-beta-D-galactopyranoside (X-gal), with highest activity against PNPG. Also acts on p-nitrophenyl-beta-D-glucopyranoside (PNPGlu) and o-nitrophenyl-beta-D-glucopyranoside (ONPGlu), but with significantly lower activity. The chain is Beta-galactosidase from Arthrobacter sp.